Here is a 312-residue protein sequence, read N- to C-terminus: Transcription factor Ouib (312 aa).

In terms of domain architecture, ZAD spans 4–79; that stretch reads IVCRVCGRQK…IKTQTKWLTI (76 aa). Residues Cys6, Cys9, Cys52, and Cys55 each contribute to the Zn(2+) site. 5 C2H2-type zinc fingers span residues 167-189, 195-217, 223-245, 251-273, and 279-303; these read YICE…MRKH, FGCK…HRVH, FACR…ERTH, YVCE…MVIH, and FRCD…SMMH.

Expressed predominantly in the prothoracic gland during embryonic and larval development.

The protein resides in the nucleus. Functionally, transcription factor required for ecdysteroid production in the prothoracic gland by activating transcription of the ecdysteroid biosynthesis gene spok. Binds to the 5'-AGCTTTATTATTTAG-3' DNA sequence in the spok enhancer region. This Drosophila melanogaster (Fruit fly) protein is Transcription factor Ouib.